Consider the following 982-residue polypeptide: Protein lin-10 (982 aa).

A compositionally biased stretch (polar residues) spans 1-16; the sequence is MSSEAVAQATAATTSP. Disordered stretches follow at residues 1–55, 119–228, 269–327, 432–511, and 525–593; these read MSSE…MIPP, QPAL…RTDS, TVAD…STVP, FAQQ…GTDD, and QREQ…SKET. Residues 33–44 show a composition bias toward gly residues; it reads KGGGAGGGGGGE. Low complexity predominate over residues 119 to 134; sequence QPALQQPRPSSQASSS. 2 stretches are compositionally biased toward polar residues: residues 143–156 and 169–190; these read RQTAGSVVSSNVSP and ETSGVVQNNDELLVPTSTSSDV. Residues 211–228 show a composition bias toward basic and acidic residues; that stretch reads GEEKSEEKRKLSGDRTDS. Over residues 301 to 318 the composition is skewed to polar residues; that stretch reads SLNQLRSSFNLPDDSTTV. 2 stretches are compositionally biased toward low complexity: residues 432 to 445 and 454 to 464; these read FAQQQIAQSAAPTP and PSTSSGPSGAL. Over residues 490 to 501 the composition is skewed to polar residues; it reads NGTSTSTTNGAQ. Positions 539–550 are enriched in low complexity; the sequence is QEAATAAQEAAE. Positions 577–593 are enriched in basic and acidic residues; the sequence is GAERRGSVDKKKNSKET. The region spanning 604–788 is the PID domain; sequence GVLFRARYLG…VLNSQELLGD (185 aa). PDZ domains follow at residues 801–886 and 892–968; these read EVVV…TVVS and EVRI…MPTS.

Interacts (via N-terminus) with egl-9 isoform e (via catalytic domain); the interaction regulates its trafficking; the interaction is direct. Interacts with rab-6.2 (in GTP-bound form). Phosphorylated on multiple Ser and Thr residues by cdk-5 which regulates its localization. Post-translationally, may be hydroxylated by egl-9 isoform e on multiple Pro residues which may prevent phosphorylation by cdk-5. Expressed in vulval epithelial cells and neurons.

It localises to the golgi apparatus. Its subcellular location is the golgi stack membrane. The protein resides in the trans-Golgi network membrane. The protein localises to the cytoplasm. It is found in the synapse. It localises to the perikaryon. In terms of biological role, required specifically for the determination of 3 vulval precursor cell fates P5.p, P6.p and P7.p during late second and early third larval stages; required for basolateral localization of receptor tyrosine kinase let-23. Could have a general but redundant role in development, functioning in diverse cell lineages to control cell fates. Regulates the trafficking of the glr-1 subunit of AMPA-type glutamate receptors (AMPRs) in the ventral nerve cord. This may be partly through interacting with the small GTPase rab-6.2 in its active GTP-bound state. The chain is Protein lin-10 from Caenorhabditis elegans.